The following is a 377-amino-acid chain: Geranylgeranyl transferase type-1 subunit beta (377 aa).

PFTB repeat units follow at residues 144–186 (KEAC…YMLN), 193–234 (MKKA…CLMG), 245–284 (LNRI…KLLK), and 291–333 (FEKN…SLME). Residues 219 to 221 (HGG) and 263 to 266 (RPNK) each bind geranylgeranyl diphosphate. Zn(2+) is bound by residues aspartate 269 and cysteine 271. Position 272-275 (272-275 (YSFW)) interacts with geranylgeranyl diphosphate. Histidine 321 provides a ligand contact to Zn(2+).

This sequence belongs to the protein prenyltransferase subunit beta family. In terms of assembly, heterodimer of FNTA and PGGT1B. PGGT1B mediates interaction with substrate peptides. Zn(2+) is required as a cofactor. Mg(2+) serves as cofactor.

The enzyme catalyses geranylgeranyl diphosphate + L-cysteinyl-[protein] = S-geranylgeranyl-L-cysteinyl-[protein] + diphosphate. Its function is as follows. Catalyzes the transfer of a geranyl-geranyl moiety from geranyl-geranyl pyrophosphate to a cysteine at the fourth position from the C-terminus of proteins having the C-terminal sequence Cys-aliphatic-aliphatic-X. Known substrates include RAC1, RAC2, RAP1A and RAP1B. This Homo sapiens (Human) protein is Geranylgeranyl transferase type-1 subunit beta (PGGT1B).